A 343-amino-acid chain; its full sequence is Geranylgeranyl pyrophosphate synthase (343 aa).

The segment covering 1-12 has biased composition (basic and acidic residues); that stretch reads MAYTVEPREHSK. The segment at 1–26 is disordered; sequence MAYTVEPREHSKNTTLPTVAMPPSPP. Residues lysine 69, arginine 72, and histidine 101 each contribute to the isopentenyl diphosphate site. Mg(2+)-binding residues include aspartate 108 and aspartate 112. Arginine 117 contacts dimethylallyl diphosphate. Arginine 118 is an isopentenyl diphosphate binding site. Residues threonine 196 and glutamine 229 each coordinate dimethylallyl diphosphate. Aspartate 232 serves as a coordination point for Mg(2+). The dimethylallyl diphosphate site is built by asparagine 236, lysine 246, and lysine 256.

It belongs to the FPP/GGPP synthase family. It depends on Mg(2+) as a cofactor.

It catalyses the reaction isopentenyl diphosphate + dimethylallyl diphosphate = (2E)-geranyl diphosphate + diphosphate. It carries out the reaction isopentenyl diphosphate + (2E)-geranyl diphosphate = (2E,6E)-farnesyl diphosphate + diphosphate. The enzyme catalyses isopentenyl diphosphate + (2E,6E)-farnesyl diphosphate = (2E,6E,10E)-geranylgeranyl diphosphate + diphosphate. It participates in mycotoxin biosynthesis. Functionally, geranylgeranyl pyrophosphate synthase; part of the gene cluster that mediates the biosynthesis of aphidicolin, a specific inhibitor of eukaryotic DNA synthesis and DNA polymerase alpha. The geranylgeranyl pyrophosphate synthase GGS is required for supplying a sufficient amount of geranylgeranyl diphosphate (GGDP), the general precursor of diterpenes. The diterpene synthase ACS then catalyzes the conversion of geranylgeranyl diphosphate to aphidicolan-16-beta-ol via the intermediate syn-copalyldiphosphate (syn-CDP). In addition to aphidicolan-16-beta-ol, the enzyme also produces low levels of amphidicol-15-ene and amphidicol-16-ene. The cytochrome P450 monooxygenase P450-2 then catalyzes the two-step hydroxylation from aphidicolan-16-beta-ol to 3-deoxyaphidicolin via a 17,3-deoxyaphidicolin intermediate. Finally, the cytochrome P450 monooxygenase P450-1 converts 3-deoxyaphidicolin to aphidicolin. This Neocamarosporium betae (Beet black rot fungus) protein is Geranylgeranyl pyrophosphate synthase (GGS).